Reading from the N-terminus, the 276-residue chain is ESX-2 secretion-associated protein EspG2 (276 aa).

This sequence belongs to the EspG family. Interacts specifically with ESX-2-dependent PE/PPE proteins.

It localises to the cytoplasm. Functionally, specific chaperone for cognate PE/PPE proteins. Plays an important role in preventing aggregation of PE/PPE dimers. This chain is ESX-2 secretion-associated protein EspG2, found in Mycobacterium tuberculosis (strain CDC 1551 / Oshkosh).